A 545-amino-acid chain; its full sequence is Mesoderm induction early response protein 2 (545 aa).

S11 bears the Phosphoserine mark. Positions 100–189 (DPISDRESEG…SSDTEEDSLP (90 aa)) are disordered. The span at 140 to 153 (QSSADDLTPSVTSH) shows a compositional bias: polar residues. Residues 195–292 (KEIMVGPQFQ…EALRRLRFNV (98 aa)) form the ELM2 domain. The region spanning 297–349 (DGLCAWSEEECRNFEHGFRVHGKNFHLIQANKVRTRSVGECVEYYYLWKKSER) is the SANT domain. The disordered stretch occupies residues 364–464 (YVPSGTTDAD…YQPAVTAPEP (101 aa)).

Part of a complex containing at least CDYL, MIER1, MIER2, HDAC1 and HDAC2.

Its subcellular location is the nucleus. In terms of biological role, transcriptional repressor. In Homo sapiens (Human), this protein is Mesoderm induction early response protein 2 (MIER2).